A 325-amino-acid polypeptide reads, in one-letter code: GMP reductase (325 aa).

C173 acts as the Thioimidate intermediate in catalysis. Position 202 to 225 (202 to 225) interacts with NADP(+); that stretch reads IIADGGIHEHGDIAKSIRFGATMV.

It belongs to the IMPDH/GMPR family. GuaC type 2 subfamily.

It catalyses the reaction IMP + NH4(+) + NADP(+) = GMP + NADPH + 2 H(+). Functionally, catalyzes the irreversible NADPH-dependent deamination of GMP to IMP. It functions in the conversion of nucleobase, nucleoside and nucleotide derivatives of G to A nucleotides, and in maintaining the intracellular balance of A and G nucleotides. The sequence is that of GMP reductase from Albidiferax ferrireducens (strain ATCC BAA-621 / DSM 15236 / T118) (Rhodoferax ferrireducens).